A 246-amino-acid chain; its full sequence is Small ribosomal subunit protein uS2 (246 aa).

It belongs to the universal ribosomal protein uS2 family.

In Saccharophagus degradans (strain 2-40 / ATCC 43961 / DSM 17024), this protein is Small ribosomal subunit protein uS2.